Here is a 776-residue protein sequence, read N- to C-terminus: Mitochondrial intermediate peptidase (776 aa).

A mitochondrion-targeting transit peptide spans 1–28 (MRRFSTLSRRLQRVVPASSASTANTSPS). His-561 serves as a coordination point for Zn(2+). Residue Glu-562 is part of the active site. Zn(2+) contacts are provided by His-565 and His-568.

This sequence belongs to the peptidase M3 family. It depends on Zn(2+) as a cofactor.

Its subcellular location is the mitochondrion matrix. The catalysed reaction is Release of an N-terminal octapeptide as second stage of processing of some proteins imported into the mitochondrion.. Cleaves proteins, imported into the mitochondrion, to their mature size. While most mitochondrial precursor proteins are processed to the mature form in one step by mitochondrial processing peptidase (MPP), the sequential cleavage by MIP of an octapeptide after initial processing by MPP is a required step for a subgroup of nuclear-encoded precursor proteins destined for the matrix or the inner membrane. This Yarrowia lipolytica (strain CLIB 122 / E 150) (Yeast) protein is Mitochondrial intermediate peptidase (OCT1).